Reading from the N-terminus, the 1064-residue chain is Lysine-specific demethylase 4A (1064 aa).

An N-acetylalanine modification is found at alanine 2. A JmjN domain is found at 14–56 (IMTFYPTMEEFRNFSRYIAYIESQGAHRAGLAKVVPPKEWKPR). 2-oxoglutarate is bound at residue tyrosine 132. A JmjC domain is found at 142–308 (EQHVDEWNIG…YGKQAVLCSC (167 aa)). The Fe cation site is built by histidine 188 and glutamate 190. Residues asparagine 198 and lysine 206 each coordinate 2-oxoglutarate. Cysteine 234 and histidine 240 together coordinate Zn(2+). A 2-oxoglutarate-binding site is contributed by lysine 241. Histidine 276 contacts Fe cation. Positions 306 and 308 each coordinate Zn(2+). 5 disordered regions span residues 354–384 (LKDS…EEGD), 434–489 (LAPV…LDLS), 502–537 (SGSK…QGQE), 549–573 (RGDG…SISE), and 590–643 (NKKT…LSQL). Positions 368–382 (ECPEEDVEAADQGEE) are enriched in acidic residues. Basic and acidic residues predominate over residues 460 to 472 (TEVKFEELKNVKL). Acidic residues predominate over residues 473–482 (EEEDEEDEPE). Over residues 509–525 (SSSLGSTSSQDSVSSDS) the composition is skewed to low complexity. Serine 523 carries the post-translational modification Phosphoserine. Over residues 528–537 (AESVSCQGQE) the composition is skewed to polar residues. Positions 593–608 (TKGRRQPLSKLPRHHP) are enriched in basic residues. The interval 597 to 638 (RQPLSKLPRHHPLVLQECGSDDETSEQLTPEEEAEETEAWAK) is interaction with NCOR1. Residues 615–634 (GSDDETSEQLTPEEEAEETE) show a composition bias toward acidic residues. The PHD-type 1 zinc finger occupies 709-767 (MCFTTTGCSTDINLSTPYLEEDGTSMLVSCKKCSVRVHASCYGVPPAKASEEWMCSRCS). The segment at 772 to 805 (EEDCCLCSLRGGALQRANDDRWVHVSCAVAILEA) adopts a C2HC pre-PHD-type zinc-finger fold. The PHD-type 2 zinc finger occupies 828–885 (LKCVFCKKRRKRNAGCCVQCSHGRCPTAFHVSCAQAAGVMMQPDDWPFVVFITCFRHK). 2 consecutive Tudor domains span residues 897 to 954 (LSIT…CLQL) and 955 to 1011 (GPPA…EELP).

It belongs to the JHDM3 histone demethylase family. Interacts with histone deacetylase proteins HDAC1, HDAC2 and HDAC3. Interacts with RB and NCOR1. Interacts with VRK1. Fe(2+) serves as cofactor. In terms of processing, ubiquitinated by RNF8 and RNF168, leading to its degradation. Degradation promotes accessibility of H4K20me2 mark for DNA repair protein TP53BP1, which is then recruited. Also ubiquitinated by the SCF(FBXO22) complex; leading to proteasomal degradation. As to expression, widely expressed.

The protein localises to the nucleus. It carries out the reaction N(6),N(6),N(6)-trimethyl-L-lysyl(9)-[histone H3] + 2 2-oxoglutarate + 2 O2 = N(6)-methyl-L-lysyl(9)-[histone H3] + 2 formaldehyde + 2 succinate + 2 CO2. The enzyme catalyses N(6),N(6),N(6)-trimethyl-L-lysyl(36)-[histone H3] + 2 2-oxoglutarate + 2 O2 = N(6)-methyl-L-lysyl(36)-[histone H3] + 2 formaldehyde + 2 succinate + 2 CO2. Functionally, histone demethylase that specifically demethylates 'Lys-9' and 'Lys-36' residues of histone H3, thereby playing a central role in histone code. Does not demethylate histone H3 'Lys-4', H3 'Lys-27' nor H4 'Lys-20'. Demethylates trimethylated H3 'Lys-9' and H3 'Lys-36' residue, while it has no activity on mono- and dimethylated residues. Demethylation of Lys residue generates formaldehyde and succinate. Participates in transcriptional repression of ASCL2 and E2F-responsive promoters via the recruitment of histone deacetylases and NCOR1, respectively. This is Lysine-specific demethylase 4A (Kdm4a) from Mus musculus (Mouse).